The following is a 669-amino-acid chain: Armadillo repeat-containing protein gudu (669 aa).

The span at 1-10 shows a compositional bias: polar residues; it reads MIGTSSGTSH. Positions 1–53 are disordered; that stretch reads MIGTSSGTSHNRSRKKKEQCGSCPNRFSKDKRQVAAEDSDTTEVESSTDEEER. Positions 37 to 51 are enriched in acidic residues; that stretch reads EDSDTTEVESSTDEE. ARM repeat units lie at residues 100-139, 141-180, 240-279, 281-320, 322-365, 367-406, 408-447, 492-531, 574-613, and 615-654; these read QINQFAISDIGGLDVLVNILECSDTKCCLGALKVLSDITL, IDIRKTIVDLDGIPLIVDILNSSMKDLKTMAAETLANVCK, KHNMEQMRKSGIVPLMAQLLKSCHIDVVIPIMGTVRKCSS, PKFQLAITTEGMIPDIVSHLSSENTELKMEGSTAIYKCAF, GTTR…MCAV, DANVKVLDQLRTVNHLVALLNDECDEVLTNVTGAISECVR, QSNREQLRQAGGLPAMVSLLNSSHAPLLENLAKGLKECAE, DSAELVRSLVGAMELVVGLLKSKDIMVLSAVCAAIATIAQ, GNNTEELGRLRTVTPIVTYMTSDNPLVHRSTAMALEKLSM, and PQNCITMHQSGVVPFLLECIGSTNKELQLAAAGCLRNIRE.

Highly expressed in testis.

Important for spermatogenesis where it may have a role in sperm individualization. This Drosophila melanogaster (Fruit fly) protein is Armadillo repeat-containing protein gudu.